The following is a 618-amino-acid chain: Cell pattern formation-associated protein STU1 (618 aa).

The segment covering 13-28 (MSAGPTQQPPTVTSYN) has biased composition (polar residues). Positions 13-105 (MSAGPTQQPP…FDTSGQIAPP (93 aa)) are disordered. Over residues 48-59 (YGGYPYTNGMPS) the composition is skewed to low complexity. Residues 91–101 (NQYSGFDTSGQ) are compositionally biased toward polar residues. Residues 110 to 216 (RVTATLWEDE…HNISALLYHP (107 aa)) form the HTH APSES-type domain. A DNA-binding region (H-T-H motif) is located at residues 144–165 (GTKLLNVAGMTRGRRDGILKSE). Disordered regions lie at residues 229-355 (AERR…YDGS) and 390-618 (SEMG…SRRR). 4 stretches are compositionally biased toward polar residues: residues 256 to 266 (MSQNGSQSLSG), 284 to 298 (TSAS…SDSF), 305 to 326 (AMSN…TRSM), and 336 to 355 (GSTL…YDGS). Residues 438 to 451 (DHEHDPEYTHDSRT) show a composition bias toward basic and acidic residues. Residues 452-476 (YDNSQSQYNYTAPPVSSISSEQAHV) are compositionally biased toward polar residues. A compositionally biased stretch (low complexity) spans 494-512 (PRSAAAPQAYYQQAYSTSP). The span at 513–563 (RSATHQSTSNLYNVMSNDRGSTTNGSANGDVYSQSTDLSNGYATPVTNGNA) shows a compositional bias: polar residues. Residues 566-588 (KRGRDDDDDRSSSSGQMDLKRRK) form a nuclear localization domain region.

Belongs to the EFG1/PHD1/stuA family.

It localises to the nucleus. In terms of biological role, transcription factor that regulates asexual reproduction. Binds the StuA-response elements (StRE) with the consensus sequence 5'-(A/T)CGCG(T/A)N(A/C)-3' at the promoters of target genes. Required for appressorium-mediated infection of rice leaves due to its involvement in the mobilization of lipids and glycogen. This Pyricularia oryzae (strain 70-15 / ATCC MYA-4617 / FGSC 8958) (Rice blast fungus) protein is Cell pattern formation-associated protein STU1.